A 127-amino-acid polypeptide reads, in one-letter code: Large ribosomal subunit protein eL8 (127 aa).

It belongs to the eukaryotic ribosomal protein eL8 family. In terms of assembly, part of the 50S ribosomal subunit. Probably part of the RNase P complex.

It is found in the cytoplasm. In terms of biological role, multifunctional RNA-binding protein that recognizes the K-turn motif in ribosomal RNA, the RNA component of RNase P, box H/ACA, box C/D and box C'/D' sRNAs. The sequence is that of Large ribosomal subunit protein eL8 from Aeropyrum pernix (strain ATCC 700893 / DSM 11879 / JCM 9820 / NBRC 100138 / K1).